Consider the following 179-residue polypeptide: Peptidyl-tRNA hydrolase 2, mitochondrial (179 aa).

A helical membrane pass occupies residues serine 15–phenylalanine 37. Glycyl lysine isopeptide (Lys-Gly) (interchain with G-Cter in ubiquitin) cross-links involve residues lysine 47, lysine 76, lysine 81, lysine 95, lysine 106, lysine 115, lysine 171, and lysine 177.

This sequence belongs to the PTH2 family. Monomer. Ubiquitinated by PRKN during mitophagy, leading to its degradation and enhancement of mitophagy. Deubiquitinated by USP30.

It is found in the mitochondrion outer membrane. The enzyme catalyses an N-acyl-L-alpha-aminoacyl-tRNA + H2O = an N-acyl-L-amino acid + a tRNA + H(+). Its function is as follows. Peptidyl-tRNA hydrolase which releases tRNAs from the ribosome during protein synthesis. Promotes caspase-independent apoptosis by regulating the function of two transcriptional regulators, AES and TLE1. This Homo sapiens (Human) protein is Peptidyl-tRNA hydrolase 2, mitochondrial (PTRH2).